The sequence spans 422 residues: Electron transfer flavoprotein subunit alpha (422 aa).

The interval lysine 61 to serine 80 is disordered. FAD is bound by residues serine 329 to arginine 330, glutamine 343 to threonine 347, glycine 360 to histidine 367, and asparagine 381.

The protein belongs to the ETF alpha-subunit/FixB family. Heterodimer of an alpha and a beta subunit. The cofactor is FAD.

Functionally, participates in the electron transfer process during N,N-dimethylglycine (DMG) degradation to sarcosine. This chain is Electron transfer flavoprotein subunit alpha, found in Chromohalobacter salexigens (strain ATCC BAA-138 / DSM 3043 / CIP 106854 / NCIMB 13768 / 1H11).